A 341-amino-acid polypeptide reads, in one-letter code: L-threonine 3-dehydrogenase (341 aa).

Cys-38 provides a ligand contact to Zn(2+). Catalysis depends on charge relay system residues Thr-40 and His-43. Residues His-63, Glu-64, Cys-93, Cys-96, Cys-99, and Cys-107 each coordinate Zn(2+). NAD(+)-binding positions include Ile-175, Asp-195, Arg-200, 262-264 (LGI), and 286-287 (IY).

The protein belongs to the zinc-containing alcohol dehydrogenase family. In terms of assembly, homotetramer. Requires Zn(2+) as cofactor.

Its subcellular location is the cytoplasm. It catalyses the reaction L-threonine + NAD(+) = (2S)-2-amino-3-oxobutanoate + NADH + H(+). Its pathway is amino-acid degradation; L-threonine degradation via oxydo-reductase pathway; glycine from L-threonine: step 1/2. Catalyzes the NAD(+)-dependent oxidation of L-threonine to 2-amino-3-ketobutyrate. This Escherichia coli O17:K52:H18 (strain UMN026 / ExPEC) protein is L-threonine 3-dehydrogenase.